A 448-amino-acid chain; its full sequence is Nuclear distribution protein PAC1 (448 aa).

The LisH domain maps to 9 to 41 (QAEELHKSIIAYLAANNFQDSVTAMRTELNLGE). Positions 74–95 (SATPTSLSNRKQDPASWLPAGP) are disordered. 7 WD repeats span residues 102–143 (SHRT…RTVK), 145–185 (HTKA…KNIR), 189–236 (GHDH…CLKT), 239–278 (GHSDWIRDVSPSLDGKYLLSTGNDRTLRLWDISMNTPETK), 283–343 (GHEH…IKTL), 345–384 (GHDNWVRSLVFHPSGKFLLSVSDDKTIRCWDLSQEGKCVK), and 389–444 (MHEH…TSLR).

It belongs to the WD repeat LIS1/nudF family. As to quaternary structure, self-associates. Interacts with NDL1 and dynein.

The protein resides in the cytoplasm. It is found in the cytoskeleton. Its subcellular location is the spindle pole. Positively regulates the activity of the minus-end directed microtubule motor protein dynein. May enhance dynein-mediated microtubule sliding by targeting dynein to the microtubule plus end. Required for nuclear migration during vegetative growth as well as development. Required for retrograde early endosome (EE) transport from the hyphal tip. Required for localization of dynein to the mitotic spindle poles. Recruits additional proteins to the dynein complex at SPBs. In Fusarium vanettenii (strain ATCC MYA-4622 / CBS 123669 / FGSC 9596 / NRRL 45880 / 77-13-4) (Fusarium solani subsp. pisi), this protein is Nuclear distribution protein PAC1.